A 453-amino-acid chain; its full sequence is Putative folate transporter 2 (453 aa).

11 helical membrane passes run 41-64 (IVVY…YYLF), 76-96 (SLIL…ALIT), 108-126 (PYLF…SLAL), 132-156 (IQAT…EALV), 176-195 (IASK…YFLE), 201-220 (YIFM…CLFL), 241-260 (FINT…YMSG), 280-300 (SFMG…IIVY), 312-330 (TLIF…PIIL), 346-366 (VLSG…PLFI), and 416-437 (LSMY…VPLL).

It belongs to the major facilitator superfamily. Folate-biopterin transporter (TC 2.A.71) family.

It localises to the plastid. The protein resides in the apicoplast. The protein localises to the membrane. In terms of biological role, putative folate transporter. Required for sporogony of malaria parasites and host switching. In Plasmodium berghei (strain Anka), this protein is Putative folate transporter 2.